Here is a 791-residue protein sequence, read N- to C-terminus: Lon protease (791 aa).

Residues 28 to 223 form the Lon N-terminal domain; sequence LPVVVISEIM…YILQDIQSLL (196 aa). ATP is bound at residue 374-381; sequence GPPGVGKT. A Lon proteolytic domain is found at 610–791; the sequence is KEKIGSTNGL…SDVFSQVFVV (182 aa). Active-site residues include Ser-697 and Lys-740.

This sequence belongs to the peptidase S16 family. As to quaternary structure, homohexamer. Organized in a ring with a central cavity.

It localises to the cytoplasm. It carries out the reaction Hydrolysis of proteins in presence of ATP.. Its function is as follows. ATP-dependent serine protease that mediates the selective degradation of mutant and abnormal proteins as well as certain short-lived regulatory proteins. Required for cellular homeostasis and for survival from DNA damage and developmental changes induced by stress. Degrades polypeptides processively to yield small peptide fragments that are 5 to 10 amino acids long. Binds to DNA in a double-stranded, site-specific manner. The chain is Lon protease from Aster yellows witches'-broom phytoplasma (strain AYWB).